Here is a 153-residue protein sequence, read N- to C-terminus: MPLYEHVFLARQDASTQQVEELTTQMTGIVEGLGGKVTKTENWGVRSLTYRMNKNRKAHFVLLNIDAPSAAIAEIERQERISEDVIRYLSVRVDELEEGPSAMMRKADRDRERDDRGGGFRGERDGGGFRGDRGDRGDRGPRRPRDEETADEE.

Positions 97-153 are disordered; sequence EEGPSAMMRKADRDRERDDRGGGFRGERDGGGFRGDRGDRGDRGPRRPRDEETADEE. Basic and acidic residues predominate over residues 105–147; the sequence is RKADRDRERDDRGGGFRGERDGGGFRGDRGDRGDRGPRRPRDE.

Belongs to the bacterial ribosomal protein bS6 family.

Binds together with bS18 to 16S ribosomal RNA. This is Small ribosomal subunit protein bS6 from Bradyrhizobium sp. (strain BTAi1 / ATCC BAA-1182).